The sequence spans 130 residues: Small ribosomal subunit protein eS17 (130 aa).

It belongs to the eukaryotic ribosomal protein eS17 family.

The polypeptide is Small ribosomal subunit protein eS17 (RPS17) (Theileria parva (East coast fever infection agent)).